We begin with the raw amino-acid sequence, 400 residues long: Endophilin-B2 (400 aa).

Position 1 is an N-acetylmethionine (methionine 1). Residues 1–27 (MDFNMKKLASDAGIFFTRAVQFTEEKF) form a membrane-binding amphipathic helix region. Serine 10 is modified (phosphoserine). The BAR domain maps to 24–287 (EEKFGQAEKT…LGSSQGAIFP (264 aa)). Positions 205–234 (SASALWNDEVDKAEQELRVAQTEFDRQAEV) form a coiled coil. Residues 340–400 (SGTRKARVLY…VPVTYLELLS (61 aa)) enclose the SH3 domain. Serine 400 carries the phosphoserine modification.

The protein belongs to the endophilin family. As to quaternary structure, homodimer, and heterodimer with SH3GLB1.

Its subcellular location is the cytoplasm. This Mus musculus (Mouse) protein is Endophilin-B2 (Sh3glb2).